Here is a 732-residue protein sequence, read N- to C-terminus: Coagulation factor XIII A chain (732 aa).

The segment at 1-26 is disordered; it reads MSDTPASTFGGRRAVPPNNSNAAEVD. S2 is subject to N-acetylserine. Residues 2–38 constitute a propeptide, activation peptide; it reads SDTPASTFGGRRAVPPNNSNAAEVDLPTEELQGLVPR. Residues C315, H374, and D397 contribute to the active site. Residues N437, D439, E486, and E491 each coordinate Ca(2+). N-linked (GlcNAc...) asparagine glycosylation is present at N614.

This sequence belongs to the transglutaminase superfamily. Transglutaminase family. In terms of assembly, tetramer of two A chains (F13A1) and two B (F13B) chains. The cofactor is Ca(2+). In terms of processing, the activation peptide is released by thrombin.

The protein resides in the cytoplasm. Its subcellular location is the secreted. The enzyme catalyses L-glutaminyl-[protein] + L-lysyl-[protein] = [protein]-L-lysyl-N(6)-5-L-glutamyl-[protein] + NH4(+). Functionally, factor XIII is activated by thrombin and calcium ion to a transglutaminase that catalyzes the formation of gamma-glutamyl-epsilon-lysine cross-links between fibrin chains, thus stabilizing the fibrin clot. Also cross-link alpha-2-plasmin inhibitor, or fibronectin, to the alpha chains of fibrin. This Mus musculus (Mouse) protein is Coagulation factor XIII A chain (F13a1).